A 745-amino-acid chain; its full sequence is Mediator of RNA polymerase II transcription subunit 25 (745 aa).

The interval 1–226 (MVPGSEGPAR…PRHMVLVRGL (226 aa)) is interaction with the Mediator complex. The segment covering 233-243 (SSTSGSLQTKQ) has biased composition (polar residues). Disordered regions lie at residues 233–266 (SSTS…QALP) and 299–374 (LGPR…VTPG). Low complexity predominate over residues 252 to 262 (ASAATLSAAPP). Pro residues predominate over residues 324–342 (PAPPLAPVPPGAPKPPPAS). The segment at 389-543 (LGGQQSVSNK…VNGIRQVITN (155 aa)) is interaction with VP16. Residues 395-545 (VSNKLLAWSG…GIRQVITNHK (151 aa)) form an interaction with CREBBP region. 2 interaction with RARA regions span residues 563–652 (APPV…LLNP) and 639–705 (PGAN…WPTQ). A disordered region spans residues 584-738 (LRAPQPQPQG…PGLQPSVMED (155 aa)). Positions 596–617 (GASAATGQPQPQGATQAPTGAP) are enriched in low complexity. Positions 618–631 (QGPPGAAPGPPPSG) are enriched in pro residues. The LXXLL motif signature appears at 645–649 (LRSLL). Residues 652–663 (PAPPQTGVPPPQ) show a composition bias toward pro residues. Residue arginine 723 is modified to Asymmetric dimethylarginine.

The protein belongs to the Mediator complex subunit 25 family. As to quaternary structure, component of the Mediator complex, which is composed of MED1, MED4, MED6, MED7, MED8, MED9, MED10, MED11, MED12, MED13, MED13L, MED14, MED15, MED16, MED17, MED18, MED19, MED20, MED21, MED22, MED23, MED24, MED25, MED26, MED27, MED29, MED30, MED31, CCNC, CDK8 and CDC2L6/CDK11. The MED12, MED13, CCNC and CDK8 subunits form a distinct module termed the CDK8 module. Mediator containing the CDK8 module is less active than Mediator lacking this module in supporting transcriptional activation. Individual preparations of the Mediator complex lacking one or more distinct subunits have been variously termed ARC, CRSP, DRIP, PC2, SMCC and TRAP. Interacts with CREBBP. Interacts with ESR1, GR and THRB in a ligand-dependent fashion. Binds the Herpes simplex virus activator VP16. Interacts with RARA and RXRA in a ligand-dependent fashion.

It localises to the nucleus. Component of the Mediator complex, a coactivator involved in the regulated transcription of nearly all RNA polymerase II-dependent genes. Mediator functions as a bridge to convey information from gene-specific regulatory proteins to the basal RNA polymerase II transcription machinery. Mediator is recruited to promoters by direct interactions with regulatory proteins and serves as a scaffold for the assembly of a functional preinitiation complex with RNA polymerase II and the general transcription factors. Required for RARA/RXRA-mediated transcription. The protein is Mediator of RNA polymerase II transcription subunit 25 (Med25) of Mus musculus (Mouse).